Here is a 117-residue protein sequence, read N- to C-terminus: Hemerythrin subunit beta (117 aa).

Residues histidine 24, histidine 53, glutamate 57, histidine 72, histidine 76, histidine 105, and aspartate 110 each coordinate Fe cation.

This sequence belongs to the hemerythrin family. As to quaternary structure, octamer composed of two types of chains: alpha and beta.

Its function is as follows. Hemerythrin is a respiratory protein in blood cells of certain marine worms. The oxygen-binding site in each chain contains two iron atoms. In Lingula reevii (Inarticulated brachiopod), this protein is Hemerythrin subunit beta.